Reading from the N-terminus, the 479-residue chain is MYDSSSKIKDLSLAPFGKLQMEISETEMPGIMTIREEYEKLKPFKGAKITGCLHMTIETALLIETLQKLGARIRWCSCNIFSTLDYAAAAVSTLENVSVFAWRGETLEEYWWCVEKALTWGENGEGPDLIVDDGADASYLVHKGAEYEKLYEEKKILPDPESGKNEEERCFLSLIKSSILKNPKKWTNMAKKIIGMSEETTTGVLRVKKIEKNNGLLFTAINVNDSVTKQKYDNIYGCRHSLPDGLMRATDFLISGKIVVICGYGDVGKGCASAMKGLGARVYVTEIDPICAIQAVMEGFNVVTLEEIVEKGDFFITCTGNVDIIKLEHLLKMKNNAVVGNIGHFDDEIQVSDLFNHEGIEIENVKPQVDRVTLPNGNKIIVLAQGRLLNLSCATGHPAFVMSFSFCNQIFAQLELWENRNTGKYEKNKSYILPKELDEKVAFYHLKKLNATLTELDDNQCEFLGVSKTGPFKSEAYRY.

Residues threonine 56, aspartate 133, and glutamate 199 each coordinate substrate. 200 to 202 (TTT) contacts NAD(+). 2 residues coordinate substrate: lysine 229 and aspartate 233. NAD(+) contacts are provided by residues asparagine 234, 263 to 268 (GYGDVG), glutamate 286, asparagine 321, 342 to 344 (IGH), and asparagine 390.

Belongs to the adenosylhomocysteinase family. In terms of assembly, homotetramer. It depends on NAD(+) as a cofactor.

The enzyme catalyses S-adenosyl-L-homocysteine + H2O = L-homocysteine + adenosine. Its pathway is amino-acid biosynthesis; L-homocysteine biosynthesis; L-homocysteine from S-adenosyl-L-homocysteine: step 1/1. In terms of biological role, adenosylhomocysteine is a competitive inhibitor of S-adenosyl-L-methionine-dependent methyl transferase reactions; therefore adenosylhomocysteinase may play a key role in the control of methylations via regulation of the intracellular concentration of adenosylhomocysteine. In Plasmodium yoelii yoelii, this protein is Adenosylhomocysteinase.